The chain runs to 296 residues: Polyamine aminopropyltransferase (296 aa).

The PABS domain maps to 5–238; the sequence is ELWYETLHAN…GIMTFAWATQ (234 aa). Position 33 (glutamine 33) interacts with S-methyl-5'-thioadenosine. Spermidine is bound by residues histidine 64 and aspartate 88. S-methyl-5'-thioadenosine contacts are provided by residues glutamate 108 and 140-141; that span reads DG. Aspartate 158 acts as the Proton acceptor in catalysis. 158-161 serves as a coordination point for spermidine; the sequence is DCTD. Proline 165 is a binding site for S-methyl-5'-thioadenosine.

Belongs to the spermidine/spermine synthase family. As to quaternary structure, homodimer or homotetramer.

The protein resides in the cytoplasm. It catalyses the reaction S-adenosyl 3-(methylsulfanyl)propylamine + putrescine = S-methyl-5'-thioadenosine + spermidine + H(+). Its pathway is amine and polyamine biosynthesis; spermidine biosynthesis; spermidine from putrescine: step 1/1. In terms of biological role, catalyzes the irreversible transfer of a propylamine group from the amino donor S-adenosylmethioninamine (decarboxy-AdoMet) to putrescine (1,4-diaminobutane) to yield spermidine. In Yersinia pestis bv. Antiqua (strain Antiqua), this protein is Polyamine aminopropyltransferase.